Reading from the N-terminus, the 638-residue chain is Fructose-1,6-bisphosphatase class 3 (638 aa).

Belongs to the FBPase class 3 family. Mn(2+) is required as a cofactor.

The enzyme catalyses beta-D-fructose 1,6-bisphosphate + H2O = beta-D-fructose 6-phosphate + phosphate. Its pathway is carbohydrate biosynthesis; gluconeogenesis. The chain is Fructose-1,6-bisphosphatase class 3 from Pediococcus pentosaceus (strain ATCC 25745 / CCUG 21536 / LMG 10740 / 183-1w).